A 414-amino-acid chain; its full sequence is 3-isopropylmalate dehydratase large subunit (414 aa).

Residues Cys-295, Cys-353, and Cys-356 each contribute to the [4Fe-4S] cluster site.

This sequence belongs to the aconitase/IPM isomerase family. LeuC type 2 subfamily. Heterodimer of LeuC and LeuD. It depends on [4Fe-4S] cluster as a cofactor.

It carries out the reaction (2R,3S)-3-isopropylmalate = (2S)-2-isopropylmalate. It participates in amino-acid biosynthesis; L-leucine biosynthesis; L-leucine from 3-methyl-2-oxobutanoate: step 2/4. Catalyzes the isomerization between 2-isopropylmalate and 3-isopropylmalate, via the formation of 2-isopropylmaleate. This is 3-isopropylmalate dehydratase large subunit from Pyrobaculum islandicum (strain DSM 4184 / JCM 9189 / GEO3).